The chain runs to 185 residues: Monooxygenase hypC (185 aa).

The next 3 membrane-spanning stretches (helical) occupy residues 35-55 (TGTF…PVIL), 75-95 (GHIQ…YAAY), and 106-126 (PFAV…VFMA). N-linked (GlcNAc...) asparagine glycosylation occurs at N129. The helical transmembrane segment at 165 to 185 (ALFPLSGAVLGLLSTCKIVSF) threads the bilayer.

The protein belongs to the anthrone oxygenase family.

Its subcellular location is the membrane. It participates in mycotoxin biosynthesis. Its function is as follows. Monooxygenase; part of the fragmented gene cluster that mediates the biosynthesis of dothistromin (DOTH), a polyketide toxin very similar in structure to the aflatoxin precursor, versicolorin B. The first step of the pathway is the conversion of acetate to norsolorinic acid (NOR) and requires the fatty acid synthase subunits hexA and hexB, as well as the polyketide synthase pksA. PksA combines a hexanoyl starter unit and 7 malonyl-CoA extender units to synthesize the precursor NOR. The hexanoyl starter unit is provided to the acyl-carrier protein (ACP) domain by the fungal fatty acid synthase hexA/hexB. The second step is the conversion of NOR to averantin (AVN) and requires the norsolorinic acid ketoreductase nor1, which catalyzes the dehydration of norsolorinic acid to form (1'S)-averantin. The cytochrome P450 monooxygenase avnA then catalyzes the hydroxylation of AVN to 5'hydroxyaverantin (HAVN). The next step is performed by adhA that transforms HAVN to averufin (AVF). Averufin might then be converted to hydroxyversicolorone by cypX and avfA. Hydroxyversicolorone is further converted versiconal hemiacetal acetate (VHA) by moxY. VHA is then the substrate for the versiconal hemiacetal acetate esterase est1 to yield versiconal (VAL). Versicolorin B synthase vbsA then converts VAL to versicolorin B (VERB) by closing the bisfuran ring. Then, the activity of the versicolorin B desaturase verB leads to versicolorin A (VERA). DotB, a predicted chloroperoxidase, may perform epoxidation of the A-ring of VERA. Alternatively, a cytochrome P450, such as cypX or avnA could catalyze this step. It is also possible that another, uncharacterized, cytochrome P450 enzyme is responsible for this step. Opening of the epoxide could potentially be achieved by the epoxide hydrolase epoA. However, epoA seems not to be required for DOTH biosynthesis, but other epoxide hydrolases may have the ability to complement this hydrolysis. Alternatively, opening of the epoxide ring could be achieved non-enzymatically. The next step is the deoxygenation of ring A to yield the 5,8-dihydroxyanthraquinone which is most likely catalyzed by the NADPH dehydrogenase encoded by ver1. The last stages of DOTH biosynthesis are proposed to involve hydroxylation of the bisfuran. OrdB and norB might have oxidative roles here. An alternative possibility is that cytochrome P450 monoogenases such as avnA and cypX might perform these steps in addition to previously proposed steps. The sequence is that of Monooxygenase hypC from Dothistroma septosporum (strain NZE10 / CBS 128990) (Red band needle blight fungus).